A 532-amino-acid chain; its full sequence is Glucose-6-phosphate isomerase (532 aa).

Catalysis depends on Glu330, which acts as the Proton donor. Active-site residues include His359 and Lys461.

This sequence belongs to the GPI family.

It is found in the cytoplasm. It carries out the reaction alpha-D-glucose 6-phosphate = beta-D-fructose 6-phosphate. The protein operates within carbohydrate biosynthesis; gluconeogenesis. It functions in the pathway carbohydrate degradation; glycolysis; D-glyceraldehyde 3-phosphate and glycerone phosphate from D-glucose: step 2/4. In terms of biological role, catalyzes the reversible isomerization of glucose-6-phosphate to fructose-6-phosphate. The sequence is that of Glucose-6-phosphate isomerase from Synechococcus sp. (strain CC9605).